Consider the following 214-residue polypeptide: EEF1A lysine methyltransferase 1 (214 aa).

Residue Ser2 is modified to N-acetylserine. Phosphoserine is present on Ser2.

Belongs to the class I-like SAM-binding methyltransferase superfamily. EFM5 family.

The protein localises to the cytoplasm. It carries out the reaction L-lysyl-[protein] + 3 S-adenosyl-L-methionine = N(6),N(6),N(6)-trimethyl-L-lysyl-[protein] + 3 S-adenosyl-L-homocysteine + 3 H(+). Functionally, protein-lysine methyltransferase that selectively catalyzes the trimethylation of EEF1A at 'Lys-79'. In Mus musculus (Mouse), this protein is EEF1A lysine methyltransferase 1.